A 249-amino-acid chain; its full sequence is Very-long-chain (3R)-3-hydroxyacyl-CoA dehydratase 1 (249 aa).

The tract at residues 1–22 (MASSEEDGTNGGASEAGEEKEA) is disordered. Over 1–36 (MASSEEDGTNGGASEAGEEKEAPGRRRRLGLLATVW) the chain is Cytoplasmic. A helical transmembrane segment spans residues 37-56 (LTFYNIAMTAGWLVLAIAMV). The Lumenal portion of the chain corresponds to 57–75 (RFYMEKGTHKGLYKSIQKT). The chain crosses the membrane as a helical span at residues 76-92 (LKFFQTFALLEIVHCLI). Over 93–102 (GIVPTSVIVA) the chain is Cytoplasmic. Residues 103 to 120 (GVQVSSRIFMVWLITHSI) form a helical membrane-spanning segment. Over 121 to 126 (KPIQNE) the chain is Lumenal. Residues 127–141 (ESVVLFLVAWTVTEI) form a helical membrane-spanning segment. At 142–164 (TRYSFYTFSLLDHLPYFIKWARY) the chain is on the cytoplasmic side. Residues 165–182 (NFFIILYPVGVVGELLTI) traverse the membrane as a helical segment. Active-site residues include Y171 and E178. Over 183 to 212 (YAALPYVKKTGMFSIRLPNKYNVSFDYYYF) the chain is Lumenal. N204 carries an N-linked (GlcNAc...) asparagine glycan. Residues 213 to 230 (LLITMASYIPLFPQLYFH) form a helical membrane-spanning segment. The Cytoplasmic portion of the chain corresponds to 231–249 (MLRQRRKVLHGEVIVEKDD).

This sequence belongs to the very long-chain fatty acids dehydratase HACD family. As to quaternary structure, may interact with enzymes of the ELO family (including ELOVL1); with those enzymes that mediate condensation, the first of the four steps of the reaction cycle responsible for fatty acids elongation, may be part of a larger fatty acids elongase complex. Interacts with TECR. Skeletal muscle.

Its subcellular location is the endoplasmic reticulum membrane. The catalysed reaction is a very-long-chain (3R)-3-hydroxyacyl-CoA = a very-long-chain (2E)-enoyl-CoA + H2O. The enzyme catalyses (3R)-hydroxyhexadecanoyl-CoA = (2E)-hexadecenoyl-CoA + H2O. It catalyses the reaction (3R)-hydroxyoctadecanoyl-CoA = (2E)-octadecenoyl-CoA + H2O. It carries out the reaction (3R)-hydroxyeicosanoyl-CoA = (2E)-eicosenoyl-CoA + H2O. The catalysed reaction is (3R)-hydroxydocosanoyl-CoA = (2E)-docosenoyl-CoA + H2O. The enzyme catalyses (3R)-hydroxytetracosanoyl-CoA = (2E)-tetracosenoyl-CoA + H2O. It catalyses the reaction (3R)-hydroxyhexacosanoyl-CoA = (2E)-hexacosenoyl-CoA + H2O. It participates in lipid metabolism; fatty acid biosynthesis. Its function is as follows. Catalyzes the third of the four reactions of the long-chain fatty acids elongation cycle. This endoplasmic reticulum-bound enzymatic process, allows the addition of two carbons to the chain of long- and very long-chain fatty acids/VLCFAs per cycle. This enzyme catalyzes the dehydration of the 3-hydroxyacyl-CoA intermediate into trans-2,3-enoyl-CoA, within each cycle of fatty acid elongation. Thereby, it participates in the production of VLCFAs of different chain lengths that are involved in multiple biological processes as precursors of membrane lipids and lipid mediators. In Canis lupus familiaris (Dog), this protein is Very-long-chain (3R)-3-hydroxyacyl-CoA dehydratase 1 (HACD1).